The chain runs to 445 residues: MMEESGIETTPPGTPPPNPAGLAATAMSSTPVPLAATSSFSSPNVSSMESFPPLAYSTPQPPLPPVRPSAPLPFVPPPAVPSVPPLVTSMPPPVSPSTAAAFGNPPVSHFPPSTSAPNTLLPAPPSGPPISGFSVGSTYDITRGHAGRAPQTPLMPSFSAPSGTGLLPTPITQQASLTSLAQGTGTTSAITFPEEQEDPRITRGQDEASAGGIWGFIKGVAGNPMVKSVLDKTKHSVESMITTLDPGMAPYIKSGGELDIVVTSNKEVKVAAVRDAFQEVFGLAVVVGEAGQSNIAPQPVGYAAGLKGAQERIDSLRRTGVIHEKQTAVSVENFIAELLPDKWFDIGCLVVEDPVHGIHLETFTQATPVPLEFVQQAQSLTPQDYNLRWSGLLVTVGEVLEKSLLNVSRTDWHMAFTGMSRRQMIYSAARAIAGMYKQRLPPRTV.

2 disordered regions span residues 1–71 (MMEE…PSAP) and 105–167 (PPVS…TGLL). The segment covering 27–49 (MSSTPVPLAATSSFSSPNVSSME) has biased composition (polar residues). The segment covering 59-71 (PQPPLPPVRPSAP) has biased composition (pro residues). Residues serine 209 and serine 408 each carry the phosphoserine modification.

Belongs to the PRRC1 family. In terms of assembly, interacts with PRKAR1A; resulting in PKA activation. In terms of tissue distribution, ubiquitously expressed with higher expression in kidney, liver and placenta. Detected in embryonic kidney cells (HEK293 cells) (at protein level). Specifically expressed in liver.

Its subcellular location is the golgi apparatus. It is found in the cytoplasm. Its function is as follows. May act as a regulator of the protein kinase A (PKA) activity during embryonic development. This chain is Protein PRRC1 (PRRC1), found in Homo sapiens (Human).